Reading from the N-terminus, the 298-residue chain is Ribosomal RNA small subunit methyltransferase A (298 aa).

N30, V32, G57, E78, D108, and N126 together coordinate S-adenosyl-L-methionine.

This sequence belongs to the class I-like SAM-binding methyltransferase superfamily. rRNA adenine N(6)-methyltransferase family. RsmA subfamily.

The protein resides in the cytoplasm. It carries out the reaction adenosine(1518)/adenosine(1519) in 16S rRNA + 4 S-adenosyl-L-methionine = N(6)-dimethyladenosine(1518)/N(6)-dimethyladenosine(1519) in 16S rRNA + 4 S-adenosyl-L-homocysteine + 4 H(+). In terms of biological role, specifically dimethylates two adjacent adenosines (A1518 and A1519) in the loop of a conserved hairpin near the 3'-end of 16S rRNA in the 30S particle. May play a critical role in biogenesis of 30S subunits. In Cutibacterium acnes (strain DSM 16379 / KPA171202) (Propionibacterium acnes), this protein is Ribosomal RNA small subunit methyltransferase A.